The sequence spans 548 residues: Chaperonin GroEL (548 aa).

ATP is bound by residues 29-32 (TMGP), lysine 50, 86-90 (DGTTT), glycine 414, 478-480 (NAA), and aspartate 494.

It belongs to the chaperonin (HSP60) family. As to quaternary structure, forms a cylinder of 14 subunits composed of two heptameric rings stacked back-to-back. Interacts with the co-chaperonin GroES.

Its subcellular location is the cytoplasm. The enzyme catalyses ATP + H2O + a folded polypeptide = ADP + phosphate + an unfolded polypeptide.. Its function is as follows. Together with its co-chaperonin GroES, plays an essential role in assisting protein folding. The GroEL-GroES system forms a nano-cage that allows encapsulation of the non-native substrate proteins and provides a physical environment optimized to promote and accelerate protein folding. This chain is Chaperonin GroEL, found in Legionella pneumophila (strain Paris).